The chain runs to 432 residues: UDP-N-acetylmuramate--L-alanine ligase (432 aa).

108–114 (GAHGKTS) is a binding site for ATP.

Belongs to the MurCDEF family.

The protein localises to the cytoplasm. The enzyme catalyses UDP-N-acetyl-alpha-D-muramate + L-alanine + ATP = UDP-N-acetyl-alpha-D-muramoyl-L-alanine + ADP + phosphate + H(+). It functions in the pathway cell wall biogenesis; peptidoglycan biosynthesis. In terms of biological role, cell wall formation. The sequence is that of UDP-N-acetylmuramate--L-alanine ligase from Bacillus pumilus (strain SAFR-032).